We begin with the raw amino-acid sequence, 211 residues long: N-(5'-phosphoribosyl)anthranilate isomerase (211 aa).

Belongs to the TrpF family.

The catalysed reaction is N-(5-phospho-beta-D-ribosyl)anthranilate = 1-(2-carboxyphenylamino)-1-deoxy-D-ribulose 5-phosphate. The protein operates within amino-acid biosynthesis; L-tryptophan biosynthesis; L-tryptophan from chorismate: step 3/5. This chain is N-(5'-phosphoribosyl)anthranilate isomerase, found in Zymomonas mobilis subsp. mobilis (strain ATCC 31821 / ZM4 / CP4).